Here is a 629-residue protein sequence, read N- to C-terminus: 5-aminolevulinate synthase, mitochondrial (629 aa).

Residues 1-69 constitute a mitochondrion transit peptide; the sequence is MDSVLRQSKA…VQSARTGGRA (69 aa). Residues Arg-155, Ser-268, and Lys-287 each coordinate substrate. Pyridoxal 5'-phosphate contacts are provided by Ser-320, His-348, and Thr-388. The active site involves Lys-391. Lys-391 bears the N6-(pyridoxal phosphate)lysine mark. Pyridoxal 5'-phosphate contacts are provided by Thr-420 and Thr-421. Thr-506 lines the substrate pocket.

It belongs to the class-II pyridoxal-phosphate-dependent aminotransferase family. Homodimer. Pyridoxal 5'-phosphate serves as cofactor.

It is found in the mitochondrion matrix. The enzyme catalyses succinyl-CoA + glycine + H(+) = 5-aminolevulinate + CO2 + CoA. The protein operates within porphyrin-containing compound metabolism; protoporphyrin-IX biosynthesis; 5-aminolevulinate from glycine: step 1/1. Catalyzes the synthesis of 5-aminolevulinate (ALA) from succinyl-CoA and glycine, the first and rate-limiting step in heme biosynthesis. This is 5-aminolevulinate synthase, mitochondrial (alv-1) from Neurospora crassa (strain ATCC 24698 / 74-OR23-1A / CBS 708.71 / DSM 1257 / FGSC 987).